The primary structure comprises 662 residues: DNA topoisomerase 4 subunit B (662 aa).

Residues Y20, N60, D87, 129–135 (GLHGVGI), and K359 each bind ATP. The Toprim domain occupies 439 to 553 (TELFIVEGDS…EGHLYLAKPP (115 aa)). The Mg(2+) site is built by E445, D518, and D520.

The protein belongs to the type II topoisomerase family. ParE type 1 subfamily. Heterotetramer composed of ParC and ParE. Requires Mg(2+) as cofactor. It depends on Mn(2+) as a cofactor. The cofactor is Ca(2+).

It catalyses the reaction ATP-dependent breakage, passage and rejoining of double-stranded DNA.. Its function is as follows. Topoisomerase IV is essential for chromosome segregation. It relaxes supercoiled DNA. Performs the decatenation events required during the replication of a circular DNA molecule. The polypeptide is DNA topoisomerase 4 subunit B (Rickettsia conorii (strain ATCC VR-613 / Malish 7)).